The chain runs to 204 residues: Small ribosomal subunit protein uS7 (204 aa).

Methionine 1 carries the post-translational modification N-acetylmethionine. Threonine 2 is modified (N-acetylthreonine; in 40S ribosomal protein S5, N-terminally processed). Threonine 14 is subject to Phosphothreonine. Position 47 is an N6-acetyllysine; alternate (lysine 47). A Glycyl lysine isopeptide (Lys-Gly) (interchain with G-Cter in SUMO2); alternate cross-link involves residue lysine 47. Residue serine 142 is modified to Phosphoserine.

It belongs to the universal ribosomal protein uS7 family. As to quaternary structure, component of the small ribosomal subunit. Part of the small subunit (SSU) processome, composed of more than 70 proteins and the RNA chaperone small nucleolar RNA (snoRNA) U3.

It localises to the cytoplasm. The protein resides in the nucleus. Its subcellular location is the nucleolus. Its function is as follows. Component of the small ribosomal subunit. The ribosome is a large ribonucleoprotein complex responsible for the synthesis of proteins in the cell. Part of the small subunit (SSU) processome, first precursor of the small eukaryotic ribosomal subunit. During the assembly of the SSU processome in the nucleolus, many ribosome biogenesis factors, an RNA chaperone and ribosomal proteins associate with the nascent pre-rRNA and work in concert to generate RNA folding, modifications, rearrangements and cleavage as well as targeted degradation of pre-ribosomal RNA by the RNA exosome. The sequence is that of Small ribosomal subunit protein uS7 (Rps5) from Rattus norvegicus (Rat).